Here is a 258-residue protein sequence, read N- to C-terminus: Tryptophan synthase alpha chain (258 aa).

Catalysis depends on proton acceptor residues Glu-52 and Asp-63.

This sequence belongs to the TrpA family. In terms of assembly, tetramer of two alpha and two beta chains.

The enzyme catalyses (1S,2R)-1-C-(indol-3-yl)glycerol 3-phosphate + L-serine = D-glyceraldehyde 3-phosphate + L-tryptophan + H2O. The protein operates within amino-acid biosynthesis; L-tryptophan biosynthesis; L-tryptophan from chorismate: step 5/5. In terms of biological role, the alpha subunit is responsible for the aldol cleavage of indoleglycerol phosphate to indole and glyceraldehyde 3-phosphate. The polypeptide is Tryptophan synthase alpha chain (Streptococcus pneumoniae (strain 70585)).